A 192-amino-acid polypeptide reads, in one-letter code: Cytidylate kinase (192 aa).

ATP is bound at residue 12–20; sequence GLAGSGTTT.

The protein belongs to the cytidylate kinase family. Type 2 subfamily.

The protein localises to the cytoplasm. It carries out the reaction CMP + ATP = CDP + ADP. The enzyme catalyses dCMP + ATP = dCDP + ADP. The sequence is that of Cytidylate kinase (cmk) from Pyrococcus horikoshii (strain ATCC 700860 / DSM 12428 / JCM 9974 / NBRC 100139 / OT-3).